The primary structure comprises 312 residues: Porphobilinogen deaminase (312 aa).

Cysteine 241 bears the S-(dipyrrolylmethanemethyl)cysteine mark.

The protein belongs to the HMBS family. In terms of assembly, monomer. Requires dipyrromethane as cofactor.

It carries out the reaction 4 porphobilinogen + H2O = hydroxymethylbilane + 4 NH4(+). The protein operates within porphyrin-containing compound metabolism; protoporphyrin-IX biosynthesis; coproporphyrinogen-III from 5-aminolevulinate: step 2/4. Tetrapolymerization of the monopyrrole PBG into the hydroxymethylbilane pre-uroporphyrinogen in several discrete steps. This Trichlorobacter lovleyi (strain ATCC BAA-1151 / DSM 17278 / SZ) (Geobacter lovleyi) protein is Porphobilinogen deaminase.